The sequence spans 232 residues: Lipid A 1-phosphatase (232 aa).

6 helical membrane passes run 10–30 (LFIT…PVGA), 42–62 (ELLT…LLFF), 80–100 (ALYV…SGLL), 136–156 (FPSG…LLFP), 160–180 (VAFI…GAHY), and 183–203 (DVIA…IVYA).

It belongs to the lipid A LpxE 1-phosphatase family.

The protein localises to the cell inner membrane. Its pathway is bacterial outer membrane biogenesis; LPS lipid A biosynthesis. Probably removes the 1-phosphate moiety from lipid A species. Does not seem to act on other membrane components, nor does it dephosphorylate the 4'-phosphate group of lipid A and/or lipid A precursors. This chain is Lipid A 1-phosphatase, found in Rhizobium etli (strain ATCC 51251 / DSM 11541 / JCM 21823 / NBRC 15573 / CFN 42).